A 207-amino-acid polypeptide reads, in one-letter code: Interleukin-6 (207 aa).

The N-terminal stretch at 1–18 is a signal peptide; the sequence is MKFFSIASLGLLLVVATA. The segment at 26–47 is disordered; the sequence is REDGENSVTRNKPTRASSGKTR. The span at 31–44 shows a compositional bias: polar residues; the sequence is NSVTRNKPTRASSG. Cysteines 65 and 71 form a disulfide. Ser-74 is modified (phosphoserine). Cys-94 and Cys-104 are oxidised to a cystine.

This sequence belongs to the IL-6 superfamily. As to quaternary structure, component of a hexamer of two molecules each of IL6, IL6R and IL6ST; first binds to IL6R to associate with the signaling subunit IL6ST. Interacts with IL6R (via the N-terminal ectodomain); this interaction may be affected by IL6R-binding with SORL1, hence decreasing IL6 cis signaling. Interacts with SORL1 (via the N-terminal ectodomain); this interaction leads to IL6 internalization and lysosomal degradation. May form a trimeric complex with the soluble SORL1 ectodomain and soluble IL6R receptor; this interaction might stabilize circulating IL6, hence promoting IL6 trans signaling.

The protein localises to the secreted. Functionally, cytokine with a wide variety of biological functions in immunity, tissue regeneration, and metabolism. Binds to IL6R, then the complex associates to the signaling subunit IL6ST/gp130 to trigger the intracellular IL6-signaling pathway. The interaction with the membrane-bound IL6R and IL6ST stimulates 'classic signaling', whereas the binding of IL6 and soluble IL6R to IL6ST stimulates 'trans-signaling'. Alternatively, 'cluster signaling' occurs when membrane-bound IL6:IL6R complexes on transmitter cells activate IL6ST receptors on neighboring receiver cells. Its function is as follows. IL6 is a potent inducer of the acute phase response. Rapid production of IL6 contributes to host defense during infection and tissue injury, but excessive IL6 synthesis is involved in disease pathology. In the innate immune response, is synthesized by myeloid cells, such as macrophages and dendritic cells, upon recognition of pathogens through toll-like receptors (TLRs) at the site of infection or tissue injury. In the adaptive immune response, is required for the differentiation of B cells into immunoglobulin-secreting cells. Plays a major role in the differentiation of CD4(+) T cell subsets. Essential factor for the development of T follicular helper (Tfh) cells that are required for the induction of germinal-center formation. Required to drive naive CD4(+) T cells to the Th17 lineage. Also required for proliferation of myeloma cells and the survival of plasmablast cells. In terms of biological role, acts as an essential factor in bone homeostasis and on vessels directly or indirectly by induction of VEGF, resulting in increased angiogenesis activity and vascular permeability. Induces, through 'trans-signaling' and synergistically with IL1B and TNF, the production of VEGF. Involved in metabolic controls, is discharged into the bloodstream after muscle contraction increasing lipolysis and improving insulin resistance. 'Trans-signaling' in central nervous system also regulates energy and glucose homeostasis. Mediates, through GLP-1, crosstalk between insulin-sensitive tissues, intestinal L cells and pancreatic islets to adapt to changes in insulin demand. Also acts as a myokine. Plays a protective role during liver injury, being required for maintenance of tissue regeneration. Also has a pivotal role in iron metabolism by regulating HAMP/hepcidin expression upon inflammation or bacterial infection. Through activation of IL6ST-YAP-NOTCH pathway, induces inflammation-induced epithelial regeneration. The protein is Interleukin-6 (IL6) of Marmota monax (Woodchuck).